A 44-amino-acid chain; its full sequence is Defensin-like peptide (44 aa).

Cystine bridges form between Cys7–Cys32, Cys18–Cys40, and Cys22–Cys42.

Hemolymph.

The protein resides in the secreted. Has antibacterial activity against the Gram-positive bacterium S.lutea (MIC=1.9 uM). Lacks antibacterial activity against the Gram-positive bacteria L.monocytogenes and M.luteus, and the Gram-negative bacteria E.coli D31, E.coli ATCC 25922, and S.typhimurium. Has antifungal activity against A.niger (MIC=2.9 uM), C.albicans (MIC=2.9 uM), C.fructus (MIC=2.9 uM), C.wickerhamii (MIC=2.9 uM), P.pastoris (MIC=2.9 uM), P.stiptis (MIC=2.9 uM), P.tannophilus (MIC=2.9 uM), T.harzianum (MIC=2.9 uM), and Z.marxianus (MIC=2.9 uM), but lacks antifungal activity against C.albidus, F.oxysporum, and S.cerevisiae. This is Defensin-like peptide from Galleria mellonella (Greater wax moth).